Consider the following 223-residue polypeptide: MDDETKKLKNKNKETKEGDDVVAAESSFSSVNLHIDPTLITMNDVRQLSTQQNAALNRDLFLTLKGKHPNLPDKDKDFRIAMMLYRLAVKSSSLQSDDDATGITYTREGVEVDLSDKLWTDVVFNSKGIGNRTNALRVWGRTNDALYLAFCRQNRNLSYGGRPLDAGIPAGYHYLCADFLTGAGLTDLECAVYIQAKEQLLKKRGADDVVVTNVRQLGKFNTR.

Basic and acidic residues predominate over residues 1–19; that stretch reads MDDETKKLKNKNKETKEGD. The interval 1 to 21 is disordered; the sequence is MDDETKKLKNKNKETKEGDDV.

The protein belongs to the closteroviridae capsid protein family. Post-translationally, consists of at least two size variants, CP1 and CP2, which result of post-translational proteolysis at sites approximately 12 to 15 and 26 AA from the N-terminus respectively.

The protein localises to the virion. This Citrus tristeza virus (isolate T36) (CTV) protein is Capsid protein.